We begin with the raw amino-acid sequence, 229 residues long: Calcyclin-binding protein (229 aa).

Position 2 is an N-acetylalanine (alanine 2). Residues 2–81 (ASALEELQKD…YTVKISNYGW (80 aa)) are interaction with SIAH1. Serine 3 bears the Phosphoserine mark. 2 positions are modified to N6-acetyllysine: lysine 10 and lysine 21. Serine 36 bears the Phosphoserine mark. The tract at residues 38–59 (IETELRNKMQQKSQKKPEFDNE) is disordered. Residues 74–168 (VKISNYGWDQ…AENTRWDYLT (95 aa)) form the CS domain. The interval 74–229 (VKISNYGWDQ…EKQAREDTEF (156 aa)) is interaction with SKP1. 2 positions are modified to N6-acetyllysine: lysine 86 and lysine 119. The interval 155–229 (CRKKAENTRW…EKQAREDTEF (75 aa)) is interaction with S100A6. The 61-residue stretch at 169-229 (QVEKECKEKE…EKQAREDTEF (61 aa)) folds into the SGS domain.

In terms of assembly, component of some large E3 complex at least composed of UBE2D1, SIAH1, CACYBP/SIP, SKP1, APC and TBL1X. Interacts directly with SIAH1, SIAH2 and SKP1. Interacts with protein of the S100 family S100A1, S100A6, S100B, S100P and S100A12 in a calcium-dependent manner. Post-translationally, phosphorylated on serine residues. Phosphorylated upon induction by RA or at high calcium concentrations.

The protein localises to the nucleus. It localises to the cytoplasm. May be involved in calcium-dependent ubiquitination and subsequent proteasomal degradation of target proteins. Probably serves as a molecular bridge in ubiquitin E3 complexes. Participates in the ubiquitin-mediated degradation of beta-catenin (CTNNB1). The chain is Calcyclin-binding protein (Cacybp) from Rattus norvegicus (Rat).